A 336-amino-acid polypeptide reads, in one-letter code: Dihydroorotate dehydrogenase (quinone) (336 aa).

Residues Ala-62–Lys-66 and Thr-86 contribute to the FMN site. A substrate-binding site is contributed by Lys-66. Substrate is bound at residue Asn-111–Phe-115. FMN is bound by residues Asn-139 and Asn-172. A substrate-binding site is contributed by Asn-172. Catalysis depends on Ser-175, which acts as the Nucleophile. Substrate is bound at residue Asn-177. FMN is bound by residues Lys-217 and Thr-245. Position 246–247 (Asn-246–Thr-247) interacts with substrate. FMN is bound by residues Gly-268, Gly-297, and Tyr-318–Ser-319.

Belongs to the dihydroorotate dehydrogenase family. Type 2 subfamily. In terms of assembly, monomer. The cofactor is FMN.

The protein resides in the cell membrane. It carries out the reaction (S)-dihydroorotate + a quinone = orotate + a quinol. The protein operates within pyrimidine metabolism; UMP biosynthesis via de novo pathway; orotate from (S)-dihydroorotate (quinone route): step 1/1. Catalyzes the conversion of dihydroorotate to orotate with quinone as electron acceptor. The protein is Dihydroorotate dehydrogenase (quinone) of Edwardsiella ictaluri (strain 93-146).